The following is a 608-amino-acid chain: ATP-citrate synthase beta chain protein 1 (608 aa).

Residues 214-234 and 265-291 contribute to the ATP site; these read ILRFNNIPQIKMVVVLGELGG and FKSEVQFGHAGAKSGGEMESAQAKNQA. Glu231 lines the Mg(2+) pocket. Residue His273 is the Tele-phosphohistidine intermediate of the active site. 292–302 provides a ligand contact to CoA; it reads LQDAGATVPTS.

The protein belongs to the succinate/malate CoA ligase alpha subunit family. As to quaternary structure, heterooctamer of 4 alpha and 4 beta chains.

The protein resides in the cytoplasm. The protein localises to the cytosol. The catalysed reaction is oxaloacetate + acetyl-CoA + ADP + phosphate = citrate + ATP + CoA. Functionally, ATP citrate-lyase is the primary enzyme responsible for the synthesis of cytosolic acetyl-CoA, used for the elongation of fatty acids and biosynthesis of isoprenoids, flavonoids and malonated derivatives. May supply substrate to the cytosolic acetyl-CoA carboxylase, which generates the malonyl-CoA used for the synthesis of a multitude of compounds, including very long chain fatty acids and flavonoids. Required for normal growth and development and elongation of C18 fatty acids to C20 to C24 fatty acids in seeds. In contrast to all known animal ACL enzymes having a homomeric structure, plant ACLs are composed of alpha and beta chains. This is ATP-citrate synthase beta chain protein 1 (ACLB-1) from Arabidopsis thaliana (Mouse-ear cress).